The primary structure comprises 244 residues: 5-oxoprolinase subunit A (244 aa).

Belongs to the LamB/PxpA family. As to quaternary structure, forms a complex composed of PxpA, PxpB and PxpC.

It carries out the reaction 5-oxo-L-proline + ATP + 2 H2O = L-glutamate + ADP + phosphate + H(+). Functionally, catalyzes the cleavage of 5-oxoproline to form L-glutamate coupled to the hydrolysis of ATP to ADP and inorganic phosphate. The protein is 5-oxoprolinase subunit A of Citrobacter koseri (strain ATCC BAA-895 / CDC 4225-83 / SGSC4696).